A 179-amino-acid polypeptide reads, in one-letter code: Crossover junction endodeoxyribonuclease RuvC (179 aa).

Active-site residues include D7 and E67. Mn(2+) contacts are provided by D7 and E67. A DNA-binding loop motif is present at residues 68-74 (DQILRRQ). Catalysis depends on residues H139 and D142. H139 contributes to the Mn(2+) binding site.

Belongs to the RuvC family. In terms of assembly, homodimer which binds Holliday junction (HJ) DNA. The HJ becomes 2-fold symmetrical on binding to RuvC with unstacked arms; it has a different conformation from HJ DNA in complex with RuvA. In the full resolvosome a probable DNA-RuvA(4)-RuvB(12)-RuvC(2) complex forms which resolves the HJ. The cofactor is Mn(2+).

Its subcellular location is the cytoplasm. It carries out the reaction Endonucleolytic cleavage at a junction such as a reciprocal single-stranded crossover between two homologous DNA duplexes (Holliday junction).. Functionally, the RuvA-RuvB-RuvC complex processes Holliday junction (HJ) DNA during genetic recombination and DNA repair. Endonuclease that resolves HJ intermediates. Cleaves cruciform DNA by making single-stranded nicks across the HJ at symmetrical positions within the homologous arms, probably yielding a 5'-phosphate and a 3'-hydroxyl group; requires a central core of homology in the junction. The consensus cleavage sequence is 5'-(G/C)TC(C/G)-3' (a different site than E.coli); cleavage occurs on the 3'-side of the TC dinucleotide at the point of strand exchange. Also resolves nicked HJ intermediates, replication forks and Y-junction DNA in vitro. HJ branch migration catalyzed by RuvA-RuvB allows RuvC to scan DNA until it finds its consensus sequence, where it cleaves and resolves the cruciform DNA. Its function is as follows. Binds HJ DNA independently of homologous core or consensus sequence; Mn(2+) is not essential for binding but improves it, while &gt;1.0 mM Mg(2+) inhibit binding. Also binds Y-junction DNA less well. Requires a homologous core to cleave DNA. Another study shows divalent cations (Mn(2+), Mg(2+) and Ca(2+), tested up to 5.0 mM) improve DNA binding considerably over binding in their absence. This is Crossover junction endodeoxyribonuclease RuvC from Deinococcus radiodurans (strain ATCC 13939 / DSM 20539 / JCM 16871 / CCUG 27074 / LMG 4051 / NBRC 15346 / NCIMB 9279 / VKM B-1422 / R1).